The primary structure comprises 834 residues: Periplasmic nitrate reductase (834 aa).

The tat-type signal signal peptide spans 1-29 (MNLTRREFAKANAAAIAAAAAGLPILVRA). The region spanning 41–97 (LVWNKAPCRFCGTGCSVMVATRDGQVVATHGDIKAEVNRGINCVKGYFLSKIMYGSD) is the 4Fe-4S Mo/W bis-MGD-type domain. Positions 48, 51, 55, and 83 each coordinate [4Fe-4S] cluster. Mo-bis(molybdopterin guanine dinucleotide) contacts are provided by residues K85, Q152, N177, C181, 214–221 (WGSNMAEM), 245–249 (STFEH), 264–266 (QTD), M375, Q379, N485, 511–512 (SD), K534, D561, and 721–730 (TGRVLEHWHT). Residue F797 coordinates substrate. Positions 805 and 822 each coordinate Mo-bis(molybdopterin guanine dinucleotide).

Belongs to the prokaryotic molybdopterin-containing oxidoreductase family. NasA/NapA/NarB subfamily. As to quaternary structure, component of the periplasmic nitrate reductase NapAB complex composed of NapA and NapB. The cofactor is [4Fe-4S] cluster. It depends on Mo-bis(molybdopterin guanine dinucleotide) as a cofactor. Post-translationally, predicted to be exported by the Tat system. The position of the signal peptide cleavage has not been experimentally proven.

The protein localises to the periplasm. The catalysed reaction is 2 Fe(II)-[cytochrome] + nitrate + 2 H(+) = 2 Fe(III)-[cytochrome] + nitrite + H2O. Its function is as follows. Catalytic subunit of the periplasmic nitrate reductase complex NapAB. Receives electrons from NapB and catalyzes the reduction of nitrate to nitrite. This chain is Periplasmic nitrate reductase, found in Pseudomonas aeruginosa (strain LESB58).